Consider the following 466-residue polypeptide: Coagulation factor VII (466 aa).

Residues 1–20 (MVSQALRLLCLLLGLQGCLA) form the signal peptide. A propeptide spanning residues 21–60 (AGGVAEASGGETRDXXWKPGPHRVFITQEEAHGVLHRRRR) is cleaved from the precursor. Residues 61 to 105 (ANAFLEELRPGSLERECKEEQCSFEEAREIFKDLERTKLFWISYS) enclose the Gla domain. Residues E66, E67, E74, E76, E79, E80, E85, E86, E89, and E95 each carry the 4-carboxyglutamate modification. The cysteines at positions 77 and 82 are disulfide-linked. One can recognise an EGF-like 1; calcium-binding domain in the interval 106 to 142 (DGDQCASSPCQNGGSCKDQLQSYICFCLPAFEGRNCE). Intrachain disulfides connect C110/C121, C115/C130, C132/C141, C151/C162, C158/C172, C174/C187, C195/C322, C219/C224, C238/C254, and C370/C389. The O-linked (Glc...) serine; alternate glycan is linked to S112. S112 carries an O-linked (Xyl...) serine; alternate glycan. An O-linked (Fuc) serine glycan is attached at S120. D123 carries the (3R)-3-hydroxyaspartate modification. The 42-residue stretch at 147–188 (DQLICVNENGGCEQYCSDHTGTKRSCRCHEGYSLLADGVSCT) folds into the EGF-like 2 domain. N-linked (GlcNAc...) asparagine glycosylation is present at N205. Residues 213–452 (IVGGKVCPKG…YIEWLQKLMR (240 aa)) form the Peptidase S1 domain. Active-site charge relay system residues include H253 and D302. N382 is a glycosylation site (N-linked (GlcNAc...) asparagine). D398 is a binding site for substrate. An intrachain disulfide couples C400 to C428. S404 functions as the Charge relay system in the catalytic mechanism.

This sequence belongs to the peptidase S1 family. Heterodimer of a light chain and a heavy chain linked by a disulfide bond. Post-translationally, the vitamin K-dependent, enzymatic carboxylation of some glutamate residues allows the modified protein to bind calcium. In terms of processing, the iron and 2-oxoglutarate dependent 3-hydroxylation of aspartate and asparagine is (R) stereospecific within EGF domains. O-glycosylated. O-fucosylated by POFUT1 on a conserved serine or threonine residue found in the consensus sequence C2-X(4,5)-[S/T]-C3 of EGF domains, where C2 and C3 are the second and third conserved cysteines. Post-translationally, can be either O-glucosylated or O-xylosylated at Ser-112 by POGLUT1.

Its subcellular location is the secreted. It catalyses the reaction Selective cleavage of Arg-|-Ile bond in factor X to form factor Xa.. Functionally, initiates the extrinsic pathway of blood coagulation. Serine protease that circulates in the blood in a zymogen form. Factor VII is converted to factor VIIa by factor Xa, factor XIIa, factor IXa, or thrombin by minor proteolysis. In the presence of tissue factor and calcium ions, factor VIIa then converts factor X to factor Xa by limited proteolysis. Factor VIIa also converts factor IX to factor IXa in the presence of tissue factor and calcium. The protein is Coagulation factor VII (F7) of Pan troglodytes (Chimpanzee).